The chain runs to 109 residues: Parvalbumin beta (109 aa).

EF-hand domains lie at 38 to 73 (KSKD…FDGK) and 77 to 109 (LTDK…VTKG). Ca(2+) contacts are provided by Asp51, Asp53, Ser55, Tyr57, Glu59, Glu62, Asp90, Asp92, Asp94, Lys96, and Glu101.

It belongs to the parvalbumin family.

In muscle, parvalbumin is thought to be involved in relaxation after contraction. It binds two calcium ions. The sequence is that of Parvalbumin beta from Boa constrictor (Boa).